Consider the following 698-residue polypeptide: Ion-translocating oxidoreductase complex subunit C (698 aa).

2 consecutive 4Fe-4S ferredoxin-type domains span residues 366–397 and 407–436; these read TEMG…QQLY and KARN…VQYY. Residues Cys-377, Cys-380, Cys-383, Cys-387, Cys-416, Cys-419, Cys-422, and Cys-426 each coordinate [4Fe-4S] cluster.

Belongs to the 4Fe4S bacterial-type ferredoxin family. RnfC subfamily. The complex is composed of six subunits: RnfA, RnfB, RnfC, RnfD, RnfE and RnfG. [4Fe-4S] cluster serves as cofactor.

It localises to the cell inner membrane. Part of a membrane-bound complex that couples electron transfer with translocation of ions across the membrane. In Yersinia pseudotuberculosis serotype O:1b (strain IP 31758), this protein is Ion-translocating oxidoreductase complex subunit C.